The following is a 395-amino-acid chain: Elongation factor Tu (395 aa).

Positions 10–204 constitute a tr-type G domain; it reads KPHLNIGTIG…AVDNWIEEPV (195 aa). The G1 stretch occupies residues 19 to 26; that stretch reads GHVDHGKT. 19–26 lines the GTP pocket; the sequence is GHVDHGKT. Mg(2+) is bound at residue threonine 26. Residues 60 to 64 are G2; it reads GITIN. A G3 region spans residues 81–84; sequence DCPG. Residues 81–85 and 136–139 contribute to the GTP site; these read DCPGH and NKVD. A G4 region spans residues 136–139; that stretch reads NKVD. Positions 174-176 are G5; the sequence is SAL.

Belongs to the TRAFAC class translation factor GTPase superfamily. Classic translation factor GTPase family. EF-Tu/EF-1A subfamily. Monomer.

It localises to the cytoplasm. It catalyses the reaction GTP + H2O = GDP + phosphate + H(+). Functionally, GTP hydrolase that promotes the GTP-dependent binding of aminoacyl-tRNA to the A-site of ribosomes during protein biosynthesis. This chain is Elongation factor Tu, found in Flavobacterium johnsoniae (strain ATCC 17061 / DSM 2064 / JCM 8514 / BCRC 14874 / CCUG 350202 / NBRC 14942 / NCIMB 11054 / UW101) (Cytophaga johnsonae).